Reading from the N-terminus, the 1156-residue chain is Nitric oxide synthase, inducible (1156 aa).

A DINNN-motif; mediates interaction with SPSB1, SPSB2 and SPSB4 motif is present at residues 23–27; that stretch reads DINNN. Residues 27–84 are disordered; the sequence is NVGKFYQPPSSPVTQDDPKRHSPGKHGNESPQPLTGTVKTSPESLSKLDAPPSACPRH. Residues 55-70 show a composition bias toward polar residues; it reads ESPQPLTGTVKTSPES. Residues C110 and C115 each coordinate Zn(2+). (6R)-L-erythro-5,6,7,8-tetrahydrobiopterin is bound at residue S118. C200 contacts heme b. Residues Q263, W372, Y373, and E377 each contribute to the L-arginine site. 4 residues coordinate (6R)-L-erythro-5,6,7,8-tetrahydrobiopterin: R381, I462, W463, and F476. Residue Y491 participates in heme b binding. The tract at residues 515–535 is calmodulin-binding; the sequence is FKVLVKAVFFASVLMHKAMAS. Residues 539–677 enclose the Flavodoxin-like domain; that stretch reads ATILFATETG…AFRSWAVQTF (139 aa). FMN contacts are provided by T545, E546, T547, R549, and S550. Y575 carries the phosphotyrosine modification. 6 residues coordinate FMN: S591, T592, S628, C635, E661, and Q665. The region spanning 730–970 is the FAD-binding FR-type domain; the sequence is KHVFTMRLKS…VRSASGFQLP (241 aa). An NADP(+)-binding site is contributed by R750. FAD is bound by residues H772, R906, Y908, S909, T924, and A926. An NADP(+)-binding site is contributed by T929. Y930, V943, C944, and S945 together coordinate FAD. Residues T984, R1017, S1046, R1047, K1053, Y1055, Q1057, and D1090 each coordinate NADP(+).

This sequence belongs to the NOS family. In terms of assembly, homodimer. Interacts with NHERF1. Interacts with GAPDH; induced by oxidatively-modified low-densitity lipoprotein (LDL(ox)). Interacts with S100A8 and S100A9 to form the iNOS-S100A8/9 transnitrosylase complex. Interacts with SPSB1, SPSB2 and SPSB4. Interacts with ELOC and CUL5 in the presence of SPSB1 or SPSB2 or SPSB4. Forms a complex with ASL, ASS1 and HSP90AA1; the complex regulates cell-autonomous L-arginine synthesis and citrulline recycling while channeling extracellular L-arginine to nitric oxide synthesis pathway. Requires heme b as cofactor. FAD is required as a cofactor. The cofactor is FMN. It depends on (6R)-L-erythro-5,6,7,8-tetrahydrobiopterin as a cofactor. Polyubiquitinated; mediated by SPSB1, SPSB2 and SPSB4, leading to proteasomal degradation.

It is found in the cytoplasm. The protein resides in the cytosol. It catalyses the reaction 2 L-arginine + 3 NADPH + 4 O2 + H(+) = 2 L-citrulline + 2 nitric oxide + 3 NADP(+) + 4 H2O. Its activity is regulated as follows. Regulated by calcium/calmodulin. Its function is as follows. Produces nitric oxide (NO) which is a messenger molecule with diverse functions throughout the body. In macrophages, NO mediates tumoricidal and bactericidal actions. Also has nitrosylase activity and mediates cysteine S-nitrosylation of cytoplasmic target proteins such PTGS2/COX2. As component of the iNOS-S100A8/9 transnitrosylase complex involved in the selective inflammatory stimulus-dependent S-nitrosylation of GAPDH implicated in regulation of the GAIT complex activity and probably multiple targets including ANXA5, EZR, MSN and VIM. Involved in inflammation, enhances the synthesis of pro-inflammatory mediators such as IL6 and IL8. This Bos taurus (Bovine) protein is Nitric oxide synthase, inducible (NOS2).